The sequence spans 88 residues: UPF0297 protein Cphy_2298 (88 aa).

This sequence belongs to the UPF0297 family.

This chain is UPF0297 protein Cphy_2298, found in Lachnoclostridium phytofermentans (strain ATCC 700394 / DSM 18823 / ISDg) (Clostridium phytofermentans).